A 735-amino-acid chain; its full sequence is Protein PAT1 homolog 2 (735 aa).

Disordered stretches follow at residues 39 to 93 and 336 to 366; these read TFGL…REVK and QLHPQHRRILSQRQRPQSSSRKQWESRPDPY. 2 stretches are compositionally biased toward basic and acidic residues: residues 49 to 59 and 67 to 93; these read EPTKQEEDHKK and PKIEEPEKPQPIKETKKPEKSPLREVK. The span at 346 to 356 shows a compositional bias: low complexity; that stretch reads SQRQRPQSSSR.

This sequence belongs to the PAT1 family. Interacts with ribonucleoprotein complex components. Interacts with cpeb.

Its subcellular location is the cytoplasm. The protein resides in the nucleus. Its function is as follows. RNA-binding protein that acts as a translational repressor. In Xenopus tropicalis (Western clawed frog), this protein is Protein PAT1 homolog 2 (patl2).